The sequence spans 621 residues: uncharacterized protein (621 aa).

Helical transmembrane passes span 240 to 260, 548 to 568, and 587 to 607; these read FFDAFFVILLLICHLNNNLLW, LGIVTAVVFGIIEFFNCVWTV, and VIIGIGTILVLTLLITILTFM.

The protein localises to the cell membrane. This is an uncharacterized protein from Mycoplasma pneumoniae (strain ATCC 29342 / M129 / Subtype 1) (Mycoplasmoides pneumoniae).